The chain runs to 58 residues: MAKIKIQQVRSRIRCPKDQKRTLDALGLRKLNQIVEHEATPSILGMVNKVRHLVLIVE.

It belongs to the universal ribosomal protein uL30 family. Part of the 50S ribosomal subunit.

This is Large ribosomal subunit protein uL30 from Porphyromonas gingivalis (strain ATCC 33277 / DSM 20709 / CIP 103683 / JCM 12257 / NCTC 11834 / 2561).